Here is a 434-residue protein sequence, read N- to C-terminus: 26S proteasome regulatory subunit RPN6 (434 aa).

S2 is subject to N-acetylserine. Residues A235–N404 form the PCI domain.

It belongs to the proteasome subunit S9 family. Component of the lid subcomplex of the 19S proteasome regulatory particle complex (also named PA700 complex). The 26S proteasome consists of a 20S proteasome core and two 19S regulatory subunits. In terms of processing, N-acetylated by NAT1.

Component of the lid subcomplex of the 26S proteasome, a multiprotein complex involved in the ATP-dependent degradation of ubiquitinated proteins. In the complex, RPN6 is required for proteasome assembly. This is 26S proteasome regulatory subunit RPN6 (RPN6) from Saccharomyces cerevisiae (strain ATCC 204508 / S288c) (Baker's yeast).